The sequence spans 263 residues: 3-methyl-2-oxobutanoate hydroxymethyltransferase 2 (263 aa).

Residues D45 and D84 each contribute to the Mg(2+) site. Residues 45 to 46, D84, and K112 contribute to the 3-methyl-2-oxobutanoate site; that span reads DS. A Mg(2+)-binding site is contributed by E114. Residue E181 is the Proton acceptor of the active site.

The protein belongs to the PanB family. As to quaternary structure, homodecamer; pentamer of dimers. The cofactor is Mg(2+).

It localises to the cytoplasm. The enzyme catalyses 3-methyl-2-oxobutanoate + (6R)-5,10-methylene-5,6,7,8-tetrahydrofolate + H2O = 2-dehydropantoate + (6S)-5,6,7,8-tetrahydrofolate. It participates in cofactor biosynthesis; (R)-pantothenate biosynthesis; (R)-pantoate from 3-methyl-2-oxobutanoate: step 1/2. Its function is as follows. Catalyzes the reversible reaction in which hydroxymethyl group from 5,10-methylenetetrahydrofolate is transferred onto alpha-ketoisovalerate to form ketopantoate. The chain is 3-methyl-2-oxobutanoate hydroxymethyltransferase 2 from Aliivibrio fischeri (strain ATCC 700601 / ES114) (Vibrio fischeri).